The primary structure comprises 217 residues: Frizzled-8 (217 aa).

At 1 to 26 (AGAAELQPELAVAEHVRYESTGPALC) the chain is on the extracellular side. The chain crosses the membrane as a helical span at residues 27–47 (TVVFLLVYFFGMASSIWWVIL). Residues 48–69 (SLTWFLAAGMKWGNEAIAGYAQ) are Cytoplasmic-facing. Residues 70–90 (YFHLAAWLLPSVKSIAVLALS) traverse the membrane as a helical segment. The Extracellular segment spans residues 91-113 (SVDGDPVAGICYVGNQSLENLRG). A glycan (N-linked (GlcNAc...) asparagine) is linked at Asn105. The helical transmembrane segment at 114 to 134 (FVLAPLVVYLFTGSLFLLAGF) threads the bilayer. The Cytoplasmic portion of the chain corresponds to 135–160 (VSLFRIRSVIKQGGTKTDKLEKLMIR). Residues 161–181 (IGIFTVLYTVPATIVIACYIY) form a helical membrane-spanning segment. The Extracellular portion of the chain corresponds to 182 to 209 (EQHNREAWEQAQNCSCPGDPHRPKPDYA). Asn194 carries an N-linked (GlcNAc...) asparagine glycan. A helical transmembrane segment spans residues 210–217 (VFMLKYFM).

It belongs to the G-protein coupled receptor Fz/Smo family.

The protein localises to the membrane. Its subcellular location is the cell membrane. In terms of biological role, receptor for Wnt proteins. Most of frizzled receptors are coupled to the beta-catenin canonical signaling pathway, which leads to the activation of disheveled proteins, inhibition of GSK-3 kinase, nuclear accumulation of beta-catenin and activation of Wnt target genes. A second signaling pathway involving PKC and calcium fluxes has been seen for some family members, but it is not yet clear if it represents a distinct pathway or if it can be integrated in the canonical pathway, as PKC seems to be required for Wnt-mediated inactivation of GSK-3 kinase. Both pathways seem to involve interactions with G-proteins. May be involved in transduction and intercellular transmission of polarity information during tissue morphogenesis and/or in differentiated tissues. This chain is Frizzled-8 (FZD8), found in Gallus gallus (Chicken).